The following is a 326-amino-acid chain: UDP-3-O-acylglucosamine N-acyltransferase (326 aa).

H225 functions as the Proton acceptor in the catalytic mechanism.

Belongs to the transferase hexapeptide repeat family. LpxD subfamily. As to quaternary structure, homotrimer.

The enzyme catalyses a UDP-3-O-[(3R)-3-hydroxyacyl]-alpha-D-glucosamine + a (3R)-hydroxyacyl-[ACP] = a UDP-2-N,3-O-bis[(3R)-3-hydroxyacyl]-alpha-D-glucosamine + holo-[ACP] + H(+). It functions in the pathway bacterial outer membrane biogenesis; LPS lipid A biosynthesis. Functionally, catalyzes the N-acylation of UDP-3-O-acylglucosamine using 3-hydroxyacyl-ACP as the acyl donor. Is involved in the biosynthesis of lipid A, a phosphorylated glycolipid that anchors the lipopolysaccharide to the outer membrane of the cell. The protein is UDP-3-O-acylglucosamine N-acyltransferase of Verminephrobacter eiseniae (strain EF01-2).